We begin with the raw amino-acid sequence, 242 residues long: Methylthioribulose-1-phosphate dehydratase (242 aa).

The disordered stretch occupies residues 1–22 (MAAASGHGLELANGGDATQDKL). Cysteine 97 lines the substrate pocket. The Zn(2+) site is built by histidine 115 and histidine 117. Catalysis depends on glutamate 139, which acts as the Proton donor/acceptor. Histidine 195 provides a ligand contact to Zn(2+).

This sequence belongs to the aldolase class II family. MtnB subfamily. Zn(2+) serves as cofactor.

Its subcellular location is the cytoplasm. It carries out the reaction 5-(methylsulfanyl)-D-ribulose 1-phosphate = 5-methylsulfanyl-2,3-dioxopentyl phosphate + H2O. It functions in the pathway amino-acid biosynthesis; L-methionine biosynthesis via salvage pathway; L-methionine from S-methyl-5-thio-alpha-D-ribose 1-phosphate: step 2/6. In terms of biological role, catalyzes the dehydration of methylthioribulose-1-phosphate (MTRu-1-P) into 2,3-diketo-5-methylthiopentyl-1-phosphate (DK-MTP-1-P). Functions in the methionine salvage pathway. May play a role in apoptosis. The polypeptide is Methylthioribulose-1-phosphate dehydratase (Gallus gallus (Chicken)).